The sequence spans 203 residues: Recombination protein RecR (203 aa).

The C4-type zinc finger occupies 57–72; it reads CQRCRTLAETPLCSIC. Residues 80–175 form the Toprim domain; the sequence is GLLCVVESPA…RLSRLAYGVP (96 aa).

Belongs to the RecR family.

In terms of biological role, may play a role in DNA repair. It seems to be involved in an RecBC-independent recombinational process of DNA repair. It may act with RecF and RecO. In Chromohalobacter salexigens (strain ATCC BAA-138 / DSM 3043 / CIP 106854 / NCIMB 13768 / 1H11), this protein is Recombination protein RecR.